Reading from the N-terminus, the 153-residue chain is Deoxyuridine 5'-triphosphate nucleotidohydrolase (153 aa).

Residues 71-73 (RSG), N84, 88-90 (TID), and K98 contribute to the substrate site.

Belongs to the dUTPase family. Mg(2+) is required as a cofactor.

It catalyses the reaction dUTP + H2O = dUMP + diphosphate + H(+). It participates in pyrimidine metabolism; dUMP biosynthesis; dUMP from dCTP (dUTP route): step 2/2. Functionally, this enzyme is involved in nucleotide metabolism: it produces dUMP, the immediate precursor of thymidine nucleotides and it decreases the intracellular concentration of dUTP so that uracil cannot be incorporated into DNA. The chain is Deoxyuridine 5'-triphosphate nucleotidohydrolase from Wolbachia pipientis subsp. Culex pipiens (strain wPip).